Consider the following 89-residue polypeptide: Small ribosomal subunit protein uS15 (89 aa).

The segment covering 1–21 (MSITAERKAEVIKDNARDKGD) has biased composition (basic and acidic residues). Residues 1–26 (MSITAERKAEVIKDNARDKGDTGSPE) are disordered.

This sequence belongs to the universal ribosomal protein uS15 family. As to quaternary structure, part of the 30S ribosomal subunit. Forms a bridge to the 50S subunit in the 70S ribosome, contacting the 23S rRNA.

One of the primary rRNA binding proteins, it binds directly to 16S rRNA where it helps nucleate assembly of the platform of the 30S subunit by binding and bridging several RNA helices of the 16S rRNA. Functionally, forms an intersubunit bridge (bridge B4) with the 23S rRNA of the 50S subunit in the ribosome. The polypeptide is Small ribosomal subunit protein uS15 (Sphingopyxis alaskensis (strain DSM 13593 / LMG 18877 / RB2256) (Sphingomonas alaskensis)).